The primary structure comprises 385 residues: UPF0496 protein At3g28290 (385 aa).

Residues 138-214 (KDKENDVGKK…IEMEISSRKK (77 aa)) are a coiled coil. The next 2 membrane-spanning stretches (helical) occupy residues 217–237 (IISN…SMVL) and 242–262 (VGAG…IGWV). The stretch at 267–294 (ILENKIQAREKQEEALKKAHRIANEMDK) forms a coiled coil.

The protein belongs to the UPF0496 family. As to expression, widely expressed.

It is found in the membrane. The polypeptide is UPF0496 protein At3g28290 (Arabidopsis thaliana (Mouse-ear cress)).